The following is a 185-amino-acid chain: Ribosome-recycling factor (185 aa).

A disordered region spans residues 141–161 (KQEKDKKISEDDLKRAEKEVQ).

Belongs to the RRF family.

The protein resides in the cytoplasm. Responsible for the release of ribosomes from messenger RNA at the termination of protein biosynthesis. May increase the efficiency of translation by recycling ribosomes from one round of translation to another. This is Ribosome-recycling factor from Geotalea uraniireducens (strain Rf4) (Geobacter uraniireducens).